A 510-amino-acid polypeptide reads, in one-letter code: MTMSRSSRSSVLALALATGSLVAAGPCDIYSSGGTPCIAAHSTTRALYSSYNGPLYQVQRASDGTTTTITPLSAGGVADASAQDAFCENTTCLITIIYDQSGNGNDLTQAPPGGFNGPDVGGYDNLAGAIGAPVTLNGKKAYGVFVSPGTGYRNNEAIGTATGDEPEGMYAVLDGTHYNDGCCFDYGNAETSSLDTGNGHMEAIYYGTNTAWGYGAGNGPWIMADLENGLFSGQSSDYNAGDPSISYRFVTAILKGGPNLWALRGGNAASGSLSTYYNGIRPTDASGYNPMSKEGAIILGIGGDNSVSAQGTFYEGAMTDGYPDDATENSVQADIVAAKYATTSLISGPALTVGDTVSLKVTTSGYDTRYIAHTGSTINTQVVSSSSSSTLKQQASWTVRTGLASTAAANGCVSFESVDTPGSYIRHSNFALLLNANDGTKLFSEDATFCPQDSFNDDGTNSIRSWNYPTRYWRHYENVLYVASNGGVNTFDAATAFTDDVSWVVADGFA.

An N-terminal signal peptide occupies residues 1 to 24; that stretch reads MTMSRSSRSSVLALALATGSLVAA. The segment at 25 to 342 is catalytic; the sequence is GPCDIYSSGG…ADIVAAKYAT (318 aa). 3 disulfides stabilise this stretch: cysteine 27–cysteine 37, cysteine 87–cysteine 92, and cysteine 182–cysteine 183. Asparagine 89 carries an N-linked (GlcNAc...) asparagine glycan. Substrate is bound at residue aspartate 225. The active-site Nucleophile is the glutamate 227. Substrate-binding residues include asparagine 228 and glycine 303. Catalysis depends on aspartate 304, which acts as the Proton donor. Residues 343–510 form an ABD region; the sequence is TSLISGPALT…VSWVVADGFA (168 aa). Cysteine 412 and cysteine 450 are disulfide-bonded. Residues histidine 427, asparagine 429, phenylalanine 430, aspartate 446, histidine 475, glutamate 477, leucine 480, and aspartate 500 each contribute to the substrate site.

This sequence belongs to the glycosyl hydrolase 54 family.

It is found in the secreted. The catalysed reaction is Hydrolysis of terminal non-reducing alpha-L-arabinofuranoside residues in alpha-L-arabinosides.. It functions in the pathway glycan metabolism; L-arabinan degradation. In terms of biological role, alpha-L-arabinofuranosidase involved in the degradation of arabinoxylan, a major component of plant hemicellulose. Able to hydrolyze 1,5-, 1,3- and 1,2-alpha-linkages not only in L-arabinofuranosyl oligosaccharides, but also in polysaccharides containing terminal non-reducing L-arabinofuranoses in side chains, like L-arabinan, arabinogalactan and arabinoxylan. This Emericella nidulans (strain FGSC A4 / ATCC 38163 / CBS 112.46 / NRRL 194 / M139) (Aspergillus nidulans) protein is Alpha-L-arabinofuranosidase B (abfB).